Reading from the N-terminus, the 279-residue chain is Cell division protein FtsQ (279 aa).

The segment at 1–28 (MTPMKKQLDKSLGSRRGATATRAKERAD) is disordered. Over 1–48 (MTPMKKQLDKSLGSRRGATATRAKERADNRNTGPAAIVRLLAFIPWNR) the chain is Cytoplasmic. The chain crosses the membrane as a helical span at residues 49–69 (VLLHVSIFCFWLLVLSALIAG). The Periplasmic segment spans residues 70 to 279 (VKWLDRPVAT…WKADVTPEQG (210 aa)). Positions 75–144 (RPVATVQVVG…DAVQVDLEEE (70 aa)) constitute a POTRA domain.

This sequence belongs to the FtsQ/DivIB family. FtsQ subfamily. Part of a complex composed of FtsB, FtsL and FtsQ.

Its subcellular location is the cell inner membrane. In terms of biological role, essential cell division protein. May link together the upstream cell division proteins, which are predominantly cytoplasmic, with the downstream cell division proteins, which are predominantly periplasmic. May control correct divisome assembly. In Hahella chejuensis (strain KCTC 2396), this protein is Cell division protein FtsQ.